The following is a 335-amino-acid chain: UDP-N-acetylenolpyruvoylglucosamine reductase 1 (335 aa).

In terms of domain architecture, FAD-binding PCMH-type spans 36-202 (RIGGPAAVFA…LEVELLLKPG (167 aa)). Arginine 181 is a catalytic residue. Serine 231 serves as the catalytic Proton donor. The active site involves glutamate 306.

The protein belongs to the MurB family. Requires FAD as cofactor.

Its subcellular location is the cytoplasm. It carries out the reaction UDP-N-acetyl-alpha-D-muramate + NADP(+) = UDP-N-acetyl-3-O-(1-carboxyvinyl)-alpha-D-glucosamine + NADPH + H(+). Its pathway is cell wall biogenesis; peptidoglycan biosynthesis. Cell wall formation. The protein is UDP-N-acetylenolpyruvoylglucosamine reductase 1 (murB1) of Corynebacterium glutamicum (strain ATCC 13032 / DSM 20300 / JCM 1318 / BCRC 11384 / CCUG 27702 / LMG 3730 / NBRC 12168 / NCIMB 10025 / NRRL B-2784 / 534).